The primary structure comprises 404 residues: Lysophospholipid transporter LplT (404 aa).

12 helical membrane passes run 16–36 (MIAV…LLFA), 53–73 (ILQM…GQFA), 91–111 (AGAL…LVGV), 139–159 (MMEA…GVLA), 164–184 (GVAL…NMFI), 195–213 (SWRP…LVLW), 227–247 (LFWG…PIAL), 253–273 (ATPT…AGAA), 285–305 (CLPA…QHSM), 310–330 (LLLI…NALL), 350–370 (GENT…KLGV), and 372–392 (VIAV…LLWG).

The protein belongs to the major facilitator superfamily. LplT (TC 2.A.1.42) family.

Its subcellular location is the cell inner membrane. Functionally, catalyzes the facilitated diffusion of 2-acyl-glycero-3-phosphoethanolamine (2-acyl-GPE) into the cell. The sequence is that of Lysophospholipid transporter LplT from Yersinia enterocolitica serotype O:8 / biotype 1B (strain NCTC 13174 / 8081).